Here is a 251-residue protein sequence, read N- to C-terminus: 3-deoxy-manno-octulosonate cytidylyltransferase (251 aa).

It belongs to the KdsB family.

It is found in the cytoplasm. It carries out the reaction 3-deoxy-alpha-D-manno-oct-2-ulosonate + CTP = CMP-3-deoxy-beta-D-manno-octulosonate + diphosphate. It functions in the pathway nucleotide-sugar biosynthesis; CMP-3-deoxy-D-manno-octulosonate biosynthesis; CMP-3-deoxy-D-manno-octulosonate from 3-deoxy-D-manno-octulosonate and CTP: step 1/1. Its pathway is bacterial outer membrane biogenesis; lipopolysaccharide biosynthesis. In terms of biological role, activates KDO (a required 8-carbon sugar) for incorporation into bacterial lipopolysaccharide in Gram-negative bacteria. This Brucella ovis (strain ATCC 25840 / 63/290 / NCTC 10512) protein is 3-deoxy-manno-octulosonate cytidylyltransferase.